Here is a 424-residue protein sequence, read N- to C-terminus: Dihydroorotase (424 aa).

Zn(2+) contacts are provided by histidine 61 and histidine 63. Substrate contacts are provided by residues 63–65 (HLR) and asparagine 95. Residues aspartate 153, histidine 180, and histidine 233 each contribute to the Zn(2+) site. Asparagine 279 serves as a coordination point for substrate. Aspartate 306 lines the Zn(2+) pocket. Residue aspartate 306 is part of the active site. Position 310 (histidine 310) interacts with substrate.

It belongs to the metallo-dependent hydrolases superfamily. DHOase family. Class I DHOase subfamily. Requires Zn(2+) as cofactor.

The catalysed reaction is (S)-dihydroorotate + H2O = N-carbamoyl-L-aspartate + H(+). It participates in pyrimidine metabolism; UMP biosynthesis via de novo pathway; (S)-dihydroorotate from bicarbonate: step 3/3. In terms of biological role, catalyzes the reversible cyclization of carbamoyl aspartate to dihydroorotate. The polypeptide is Dihydroorotase (Citrifermentans bemidjiense (strain ATCC BAA-1014 / DSM 16622 / JCM 12645 / Bem) (Geobacter bemidjiensis)).